A 513-amino-acid chain; its full sequence is ATP synthase subunit alpha (513 aa).

169-176 contributes to the ATP binding site; the sequence is GDRQTGKT.

This sequence belongs to the ATPase alpha/beta chains family. In terms of assembly, F-type ATPases have 2 components, CF(1) - the catalytic core - and CF(0) - the membrane proton channel. CF(1) has five subunits: alpha(3), beta(3), gamma(1), delta(1), epsilon(1). CF(0) has three main subunits: a(1), b(2) and c(9-12). The alpha and beta chains form an alternating ring which encloses part of the gamma chain. CF(1) is attached to CF(0) by a central stalk formed by the gamma and epsilon chains, while a peripheral stalk is formed by the delta and b chains.

The protein resides in the cell inner membrane. It carries out the reaction ATP + H2O + 4 H(+)(in) = ADP + phosphate + 5 H(+)(out). Produces ATP from ADP in the presence of a proton gradient across the membrane. The alpha chain is a regulatory subunit. The polypeptide is ATP synthase subunit alpha (Haemophilus influenzae (strain PittGG)).